The chain runs to 87 residues: Phosphoribosyl-ATP pyrophosphatase (87 aa).

Belongs to the PRA-PH family.

The protein resides in the cytoplasm. It carries out the reaction 1-(5-phospho-beta-D-ribosyl)-ATP + H2O = 1-(5-phospho-beta-D-ribosyl)-5'-AMP + diphosphate + H(+). It participates in amino-acid biosynthesis; L-histidine biosynthesis; L-histidine from 5-phospho-alpha-D-ribose 1-diphosphate: step 2/9. This is Phosphoribosyl-ATP pyrophosphatase from Beutenbergia cavernae (strain ATCC BAA-8 / DSM 12333 / CCUG 43141 / JCM 11478 / NBRC 16432 / NCIMB 13614 / HKI 0122).